The primary structure comprises 345 residues: Anthranilate phosphoribosyltransferase (345 aa).

5-phospho-alpha-D-ribose 1-diphosphate is bound by residues G83, G86 to D87, T91, N93 to T96, K111 to S119, and S123. Residue G83 coordinates anthranilate. Position 95 (S95) interacts with Mg(2+). Position 114 (N114) interacts with anthranilate. R169 contributes to the anthranilate binding site. D228 and E229 together coordinate Mg(2+).

Belongs to the anthranilate phosphoribosyltransferase family. As to quaternary structure, homodimer. Requires Mg(2+) as cofactor.

The enzyme catalyses N-(5-phospho-beta-D-ribosyl)anthranilate + diphosphate = 5-phospho-alpha-D-ribose 1-diphosphate + anthranilate. Its pathway is amino-acid biosynthesis; L-tryptophan biosynthesis; L-tryptophan from chorismate: step 2/5. Its function is as follows. Catalyzes the transfer of the phosphoribosyl group of 5-phosphorylribose-1-pyrophosphate (PRPP) to anthranilate to yield N-(5'-phosphoribosyl)-anthranilate (PRA). This chain is Anthranilate phosphoribosyltransferase, found in Paracoccus denitrificans (strain Pd 1222).